Reading from the N-terminus, the 624-residue chain is MQPEPKLSGAPRSSQFLPLWSKCPEGAGDAVMYASTECKAEVTPSQDGNRTFSYTLEDHTKQAFGVMNELRLSQQLCDVTLQVKYEDIPAAQFMAHKVVLASSSPVFKAMFTNGLREQGMEVVSIEGIHPKVMERLIEFAYTASISVGEKCVLHVMNGAVMYQIDSVVRACSDFLVQQLDPSNAIGIANFAEQIGCTELHQRAREYIYMHFGEVAKQEEFFNLSHCQLATLISRDDLNVRCESEVFHACIDWVKYDCPQRRFYVQALLRAVRCHALTPRFLQTQLQKCEILQADARCKDYLVQIFQELTLHKPTQAVPCRAPKVGRLIYTAGGYFRQSLSYLEAYNPSNGSWLRLADLQVPRSGLAGCVVGGLLYAVGGRNNSPDGNTDSSALDCYNPMTNQWSPCASMSVPRNRIGVGVIDGHIYAVGGSHGCIHHSSVERYEPERDEWHLVAPMLTRRIGVGVAVLNRLLYAVGGFDGTNRLNSAECYYPERNEWRMITPMNTIRSGAGVCVLHNCIYAAGGYDGQDQLNSVERYDVETETWTFVAPMRHHRSALGITVHQGKIYVLGGYDGHTFLDSVECYDPDSDTWSEVTRMTSGRSGVGVAVTMEPCRKQIDQQNCTC.

Cysteine 38 is subject to S-(2-succinyl)cysteine. Residues 77–149 (CDVTLQVKYE…AYTASISVGE (73 aa)) enclose the BTB domain. Residue arginine 135 forms an N5-[4-(S-L-cysteinyl)-5-methyl-1H-imidazol-2-yl]-L-ornithine (Arg-Cys) (interchain with C-151 in KEAP1) linkage. Cysteine 151 carries the S-(2,3-dicarboxypropyl)cysteine; alternate modification. Cysteine 151 is modified (S-(2-succinyl)cysteine; alternate). At cysteine 151 the chain carries S-nitrosocysteine; alternate. Cysteine 151 participates in a covalent cross-link: N5-[4-(S-L-cysteinyl)-5-methyl-1H-imidazol-2-yl]-L-ornithine (Cys-Arg) (interchain with R-135 in KEAP1). The BACK domain occupies 184 to 286 (AIGIANFAEQ…TPRFLQTQLQ (103 aa)). Cysteine 241 bears the S-(2-succinyl)cysteine mark. Cysteine 257 and cysteine 273 each carry S-(2,3-dicarboxypropyl)cysteine. Cysteine 288 carries the S-(2,3-dicarboxypropyl)cysteine; alternate modification. The residue at position 288 (cysteine 288) is an S-(2-succinyl)cysteine; alternate. An S-(2-succinyl)cysteine modification is found at cysteine 319. Kelch repeat units lie at residues 327–372 (LIYT…VVGG), 373–423 (LLYA…VIDG), 424–470 (HIYA…VLNR), 471–517 (LLYA…VLHN), 519–564 (IYAA…VHQG), and 565–611 (KIYV…VTME). An S-cGMP-cysteine modification is found at cysteine 434. At cysteine 613 the chain carries S-(2-succinyl)cysteine.

This sequence belongs to the KEAP1 family. Component of the BCR(KEAP1) E3 ubiquitin ligase complex, at least composed of 2 molecules of CUL3, 2 molecules of KEAP1, and RBX1. Interacts with NFE2L2/NRF2; the interaction is direct. Forms a ternary complex with NFE2L2/NRF2 and PGAM5. Interacts with (phosphorylated) SQSTM1/p62; the interaction is direct and inactivates the BCR(KEAP1) complex by sequestering it in inclusion bodies, promoting its degradation. Interacts with NFE2L1. Interacts with BPTF and PTMA. Interacts with MAP1LC3B. Interacts indirectly with ENC1. Interacts with SESN1 and SESN2. Interacts with HSP90AA1 and HSP90AB1. Interacts with PGCKA1; this interaction prevents the ubiquitination of KEAP1 by TRIM25, thus protecting KEAP1 from degradation. Non-enzymatic covalent modifications of reactive cysteines by electrophile metabolites inactivate the BCR(KEAP1) complex. Accumulation of fumarate promotes the formation of cysteine S-succination (S-(2-succinyl)cysteine), leading to inactivate the BCR(KEAP1) complex and promote NFE2L2/NRF2 nuclear accumulation and activation. Nitric oxide-dependent 8-Nitro-cGMP formation promotes cysteine guanylation (S-cGMP-cysteine), leading to NFE2L2/NRF2 nuclear accumulation and activation. Itaconate, an anti-inflammatory metabolite generated in response to lipopolysaccharide, alkylates cysteines, activating NFE2L2/NRF2. Methylglyoxal, a reactive metabolite that accumulates when the glycolytic enzyme PGK1 is inhibited, promotes formation of a methylimidazole cross-link between proximal Cys-151 and Arg-135 on another KEAP1 molecule, resulting in an inactive dimer that inactivates the BCR(KEAP1) complex. In terms of processing, degraded via a proteasomal-independent process during selective autophagy: interaction with phosphorylated SQSTM1/p62 sequesters KEAP1 in inclusion bodies, leading to its degradation. Post-translationally, auto-ubiquitinated by the BCR(KEAP1) complex. Quinone-induced oxidative stress, but not sulforaphane, increases its ubiquitination. Ubiquitination and subsequent degradation is most pronounced following prolonged exposure of cells to oxidative stress, particularly in glutathione-deficient cells that are highly susceptible to oxidative stress. Deubiquitinated by USP25; leading to stabilization. Ubiquitinated by TRIM25; leading to degradation upon ER stress.

It localises to the cytoplasm. The protein localises to the nucleus. The protein operates within protein modification; protein ubiquitination. With respect to regulation, ubiquitin ligase activity of the BCR(KEAP1) complex is inhibited by oxidative stress and electrophile metabolites such as sulforaphane. Electrophile metabolites react with reactive cysteine residues in KEAP1 and trigger non-enzymatic covalent modifications of these cysteine residues, leading to inactivate the ubiquitin ligase activity of the BCR(KEAP1) complex. Selective autophagy also inactivates the BCR(KEAP1) complex via interaction between KEAP1 and SQSTM1/p62, which sequesters the complex in inclusion bodies and promotes its degradation. Substrate-specific adapter of a BCR (BTB-CUL3-RBX1) E3 ubiquitin ligase complex that regulates the response to oxidative stress by targeting NFE2L2/NRF2 for ubiquitination. KEAP1 acts as a key sensor of oxidative and electrophilic stress: in normal conditions, the BCR(KEAP1) complex mediates ubiquitination and degradation of NFE2L2/NRF2, a transcription factor regulating expression of many cytoprotective genes. In response to oxidative stress, different electrophile metabolites trigger non-enzymatic covalent modifications of highly reactive cysteine residues in KEAP1, leading to inactivate the ubiquitin ligase activity of the BCR(KEAP1) complex, promoting NFE2L2/NRF2 nuclear accumulation and expression of phase II detoxifying enzymes. In response to selective autophagy, KEAP1 is sequestered in inclusion bodies following its interaction with SQSTM1/p62, leading to inactivation of the BCR(KEAP1) complex and activation of NFE2L2/NRF2. The BCR(KEAP1) complex also mediates ubiquitination of SQSTM1/p62, increasing SQSTM1/p62 sequestering activity and degradation. The BCR(KEAP1) complex also targets BPTF and PGAM5 for ubiquitination and degradation by the proteasome. This Mus musculus (Mouse) protein is Kelch-like ECH-associated protein 1.